The following is a 90-amino-acid chain: c-Myc-binding protein homolog (90 aa).

This sequence belongs to the AMY1 family.

The protein resides in the nucleus. This chain is c-Myc-binding protein homolog (mycbp), found in Dictyostelium discoideum (Social amoeba).